The chain runs to 102 residues: Putative pterin-4-alpha-carbinolamine dehydratase (102 aa).

Belongs to the pterin-4-alpha-carbinolamine dehydratase family.

The enzyme catalyses (4aS,6R)-4a-hydroxy-L-erythro-5,6,7,8-tetrahydrobiopterin = (6R)-L-erythro-6,7-dihydrobiopterin + H2O. This Burkholderia lata (strain ATCC 17760 / DSM 23089 / LMG 22485 / NCIMB 9086 / R18194 / 383) protein is Putative pterin-4-alpha-carbinolamine dehydratase.